We begin with the raw amino-acid sequence, 463 residues long: Probable glycosyltransferase 3 (463 aa).

Topologically, residues 1 to 24 (MAVTGGGRPAVRQQAARGKQMQRT) are cytoplasmic. Residues 25-47 (FNNVKITLICGFITLLVLRGTVG) form a helical; Signal-anchor for type II membrane protein membrane-spanning segment. Residues 48–463 (INLLTYGVGG…ALKMDAKIES (416 aa)) lie on the Lumenal side of the membrane. The tract at residues 82–125 (EIRSDTDDDDDDEEEEPLGVDASTTTTTNSTTTTATAARRRSSN) is disordered. Acidic residues predominate over residues 87–99 (TDDDDDDEEEEPL). Residues 103 to 118 (ASTTTTTNSTTTTATA) are compositionally biased toward low complexity. Residues asparagine 110, asparagine 125, and asparagine 442 are each glycosylated (N-linked (GlcNAc...) asparagine).

This sequence belongs to the glycosyltransferase 34 family.

Its subcellular location is the golgi apparatus membrane. In terms of biological role, probable glycosyltransferase that may be involved in the biosynthesis of xyloglucan. This is Probable glycosyltransferase 3 from Oryza sativa subsp. japonica (Rice).